Here is a 475-residue protein sequence, read N- to C-terminus: UDP-glycosyltransferase 76E1 (475 aa).

Residue His-19 is the Proton acceptor of the active site. Residue His-19 coordinates an anthocyanidin. Residue Asp-109 is the Charge relay of the active site. UDP-alpha-D-glucose contacts are provided by Thr-131, Ala-329, Gln-331, His-346, Trp-349, Asn-350, Ser-351, and Glu-354. Position 369 (Ala-369) interacts with an anthocyanidin. Asp-370 and Gln-371 together coordinate UDP-alpha-D-glucose.

Belongs to the UDP-glycosyltransferase family. In terms of tissue distribution, expressed in flowers and fruits.

The protein resides in the cytoplasm. It localises to the nucleus. The enzyme catalyses 2-cis-(+)-abscisate + UDP-alpha-D-glucose = beta-D-glucopyranosyl cis-(+)-abscisate + UDP. Glucosyltransferase acting on abscisic acid (ABA) but not on auxin (IAA). In Solanum lycopersicum (Tomato), this protein is UDP-glycosyltransferase 76E1.